We begin with the raw amino-acid sequence, 199 residues long: Small ribosomal subunit protein uS2 (199 aa).

It belongs to the universal ribosomal protein uS2 family.

The sequence is that of Small ribosomal subunit protein uS2 (rps2) from Thermoplasma volcanium (strain ATCC 51530 / DSM 4299 / JCM 9571 / NBRC 15438 / GSS1).